A 114-amino-acid polypeptide reads, in one-letter code: DNA-(apurinic or apyrimidinic site) endonuclease (114 aa).

Belongs to the apurinic/apyrimidinic endonuclease family. As to quaternary structure, interacts with host Ung; this interaction allows the viral AP endonuclease to localize to newly formed AP sites and cleave them, leading to inhibition of bacterial growth.

Functionally, performs endonucleolytic cleavage at abasic sites, which are generated by the base-excision activity of host Ung. The cleavage generates a 5'-deoxyribose phosphate and 3'-hydroxyl end. The sites are specifically recognized through the formation of a complex with host Ung. The viral endonucleolytic activity damages the host DNA, blocks host DNA replication and induces cell division arrest. This may provide an advantage for the phage and save nucleotides for the viral replication since it specifically targets the host DNA, which possesses more misincorporated uracils than the viral genome. The protein is DNA-(apurinic or apyrimidinic site) endonuclease of Escherichia phage T5 (Enterobacteria phage T5).